A 451-amino-acid polypeptide reads, in one-letter code: 2-succinylbenzoate--CoA ligase (451 aa).

This sequence belongs to the ATP-dependent AMP-binding enzyme family. MenE subfamily.

The catalysed reaction is 2-succinylbenzoate + ATP + CoA = 2-succinylbenzoyl-CoA + AMP + diphosphate. It functions in the pathway quinol/quinone metabolism; 1,4-dihydroxy-2-naphthoate biosynthesis; 1,4-dihydroxy-2-naphthoate from chorismate: step 5/7. The protein operates within quinol/quinone metabolism; menaquinone biosynthesis. Converts 2-succinylbenzoate (OSB) to 2-succinylbenzoyl-CoA (OSB-CoA). The chain is 2-succinylbenzoate--CoA ligase from Lactococcus lactis subsp. lactis (strain IL1403) (Streptococcus lactis).